The following is a 402-amino-acid chain: S-adenosylmethionine synthase (402 aa).

H16 contributes to the ATP binding site. Residue D18 coordinates Mg(2+). A K(+)-binding site is contributed by E44. Positions 57 and 109 each coordinate L-methionine. Residues 109-119 (QSAHIAQGVDA) form a flexible loop region. Residues 174–176 (DTK), D252, 258–259 (RK), A275, and K279 contribute to the ATP site. Residue D252 coordinates L-methionine. An L-methionine-binding site is contributed by K283.

This sequence belongs to the AdoMet synthase family. Homotetramer; dimer of dimers. Mg(2+) is required as a cofactor. K(+) serves as cofactor.

The protein localises to the cytoplasm. The catalysed reaction is L-methionine + ATP + H2O = S-adenosyl-L-methionine + phosphate + diphosphate. It participates in amino-acid biosynthesis; S-adenosyl-L-methionine biosynthesis; S-adenosyl-L-methionine from L-methionine: step 1/1. Catalyzes the formation of S-adenosylmethionine (AdoMet) from methionine and ATP. The overall synthetic reaction is composed of two sequential steps, AdoMet formation and the subsequent tripolyphosphate hydrolysis which occurs prior to release of AdoMet from the enzyme. The polypeptide is S-adenosylmethionine synthase (Rhizorhabdus wittichii (strain DSM 6014 / CCUG 31198 / JCM 15750 / NBRC 105917 / EY 4224 / RW1) (Sphingomonas wittichii)).